The chain runs to 777 residues: Zinc finger protein 786 (777 aa).

The region spanning 9–80 (LTFEDVAIYF…WGEKKKPDKE (72 aa)) is the KRAB domain. Residues 194-216 (NSCPVCRENSWEKNHLVKQQKGH) form a C2H2-type 1; degenerate zinc finger. The segment at 240–262 (ISCLGCGKSFRLKQYLVRHLDIH) adopts a C2H2-type 2 zinc-finger fold. Residues 268–291 (PQCPKCKMCFHHERTLFSHHLKNS) form a C2H2-type 3; degenerate zinc finger. The segment at 420–442 (VFCRKCGQGFTKHCGLTEHTRIL) adopts a C2H2-type 4; degenerate zinc-finger fold. C2H2-type zinc fingers lie at residues 448–470 (FWCA…QRLH), 476–498 (FQCT…QLQH), 504–526 (FSCS…LRVH), 532–554 (FQCP…QRIH), 560–582 (FSCG…FRVH), 588–610 (FQCP…QRLH), 616–638 (FQCP…QLLH), 644–665 (FSCQ…MRTH), 671–693 (FQCP…QGLH), 699–721 (FHCP…QRIH), and 727–749 (FACG…IRVH).

This sequence belongs to the krueppel C2H2-type zinc-finger protein family.

Its subcellular location is the nucleus. May be involved in transcriptional regulation. The sequence is that of Zinc finger protein 786 (Znf786) from Mus musculus (Mouse).